A 334-amino-acid chain; its full sequence is Small ribosomal subunit protein uS2 (334 aa).

It belongs to the universal ribosomal protein uS2 family.

The chain is Small ribosomal subunit protein uS2 from Xanthobacter autotrophicus (strain ATCC BAA-1158 / Py2).